We begin with the raw amino-acid sequence, 562 residues long: NAD-dependent malic enzyme (562 aa).

Y101 (proton donor) is an active-site residue. R154 provides a ligand contact to NAD(+). K172 acts as the Proton acceptor in catalysis. Residues E243, D244, and D267 each contribute to the a divalent metal cation site. NAD(+) is bound by residues D267 and N415.

The protein belongs to the malic enzymes family. As to quaternary structure, homotetramer. The cofactor is Mg(2+). Mn(2+) serves as cofactor.

The enzyme catalyses (S)-malate + NAD(+) = pyruvate + CO2 + NADH. It carries out the reaction oxaloacetate + H(+) = pyruvate + CO2. The chain is NAD-dependent malic enzyme from Shewanella woodyi (strain ATCC 51908 / MS32).